A 111-amino-acid chain; its full sequence is Large ribosomal subunit protein uL22 (111 aa).

Belongs to the universal ribosomal protein uL22 family. Part of the 50S ribosomal subunit.

Its function is as follows. This protein binds specifically to 23S rRNA; its binding is stimulated by other ribosomal proteins, e.g. L4, L17, and L20. It is important during the early stages of 50S assembly. It makes multiple contacts with different domains of the 23S rRNA in the assembled 50S subunit and ribosome. Functionally, the globular domain of the protein is located near the polypeptide exit tunnel on the outside of the subunit, while an extended beta-hairpin is found that lines the wall of the exit tunnel in the center of the 70S ribosome. The polypeptide is Large ribosomal subunit protein uL22 (Chlamydia caviae (strain ATCC VR-813 / DSM 19441 / 03DC25 / GPIC) (Chlamydophila caviae)).